Consider the following 337-residue polypeptide: Anthranilate phosphoribosyltransferase (337 aa).

5-phospho-alpha-D-ribose 1-diphosphate-binding positions include G80, 83–84, T88, 90–93, 108–116, and S120; these read GD, NIST, and KHGNRAVSS. G80 lines the anthranilate pocket. S92 serves as a coordination point for Mg(2+). Residue N111 participates in anthranilate binding. An anthranilate-binding site is contributed by R166. D224 and E225 together coordinate Mg(2+).

This sequence belongs to the anthranilate phosphoribosyltransferase family. Homodimer. Mg(2+) is required as a cofactor.

It catalyses the reaction N-(5-phospho-beta-D-ribosyl)anthranilate + diphosphate = 5-phospho-alpha-D-ribose 1-diphosphate + anthranilate. The protein operates within amino-acid biosynthesis; L-tryptophan biosynthesis; L-tryptophan from chorismate: step 2/5. Catalyzes the transfer of the phosphoribosyl group of 5-phosphorylribose-1-pyrophosphate (PRPP) to anthranilate to yield N-(5'-phosphoribosyl)-anthranilate (PRA). This chain is Anthranilate phosphoribosyltransferase, found in Anaeromyxobacter sp. (strain Fw109-5).